Consider the following 222-residue polypeptide: Fibrillarin-like rRNA/tRNA 2'-O-methyltransferase (222 aa).

Residues 86–87 (TT), 104–105 (EV), 129–130 (DA), and 149–152 (DISQ) each bind S-adenosyl-L-methionine.

The protein belongs to the methyltransferase superfamily. Fibrillarin family. In terms of assembly, interacts with nop5. Component of box C/D small ribonucleoprotein (sRNP) particles that contain rpl7ae, FlpA and nop5, plus a guide RNA.

In terms of biological role, involved in pre-rRNA and tRNA processing. Utilizes the methyl donor S-adenosyl-L-methionine to catalyze the site-specific 2'-hydroxyl methylation of ribose moieties in rRNA and tRNA. Site specificity is provided by a guide RNA that base pairs with the substrate. Methylation occurs at a characteristic distance from the sequence involved in base pairing with the guide RNA. This is Fibrillarin-like rRNA/tRNA 2'-O-methyltransferase from Thermoplasma volcanium (strain ATCC 51530 / DSM 4299 / JCM 9571 / NBRC 15438 / GSS1).